A 335-amino-acid polypeptide reads, in one-letter code: Ketol-acid reductoisomerase (NAD(P)(+)) (335 aa).

A KARI N-terminal Rossmann domain is found at 5–185 (AKIYTDKDTT…GGTRAGAIET (181 aa)). Residues 28–31 (YGSQ), R52, S56, and 86–89 (DMAQ) contribute to the NADP(+) site. H111 is a catalytic residue. G137 lines the NADP(+) pocket. The region spanning 186–331 (TFKEETETDL…RRLKEIIERG (146 aa)) is the KARI C-terminal knotted domain. The Mg(2+) site is built by D194, E198, E230, and E234. S255 is a substrate binding site. The interval 301–335 (GSPTLSKGLEEMDKSLEEQTGRRLKEIIERGRPKS) is disordered. The segment covering 308–335 (GLEEMDKSLEEQTGRRLKEIIERGRPKS) has biased composition (basic and acidic residues).

This sequence belongs to the ketol-acid reductoisomerase family. Requires Mg(2+) as cofactor.

The catalysed reaction is (2R)-2,3-dihydroxy-3-methylbutanoate + NAD(+) = (2S)-2-acetolactate + NADH + H(+). It catalyses the reaction (2R)-2,3-dihydroxy-3-methylbutanoate + NADP(+) = (2S)-2-acetolactate + NADPH + H(+). It functions in the pathway amino-acid biosynthesis; L-isoleucine biosynthesis; L-isoleucine from 2-oxobutanoate: step 2/4. The protein operates within amino-acid biosynthesis; L-valine biosynthesis; L-valine from pyruvate: step 2/4. Involved in the biosynthesis of branched-chain amino acids (BCAA). Catalyzes an alkyl-migration followed by a ketol-acid reduction of (S)-2-acetolactate (S2AL) to yield (R)-2,3-dihydroxy-isovalerate. In the isomerase reaction, S2AL is rearranged via a Mg-dependent methyl migration to produce 3-hydroxy-3-methyl-2-ketobutyrate (HMKB). In the reductase reaction, this 2-ketoacid undergoes a metal-dependent reduction by NADPH or NADH to yield (R)-2,3-dihydroxy-isovalerate. In Metallosphaera sedula (strain ATCC 51363 / DSM 5348 / JCM 9185 / NBRC 15509 / TH2), this protein is Ketol-acid reductoisomerase (NAD(P)(+)).